The chain runs to 110 residues: Envelope glycoprotein N (110 aa).

The first 17 residues, 1 to 17 (MTASTVALALFVASILG), serve as a signal peptide directing secretion. Over 18-80 (HCWVTANSTG…SLSSFSSVWA (63 aa)) the chain is Virion surface. Residues 28–41 (VASSTERSSPSTAG) are compositionally biased toward polar residues. The interval 28 to 51 (VASSTERSSPSTAGLSARPSPGPT) is disordered. A helical transmembrane segment spans residues 81-101 (LINALLVVVATFFYLVYLCFF). At 102–110 (KFVDEVVHA) the chain is on the intravirion side.

It belongs to the herpesviridae glycoprotein N family. In terms of assembly, interacts (via N-terminus) with gM (via N-terminus). The gM-gN heterodimer forms the gCII complex. O-glycosylated. Contains alpha 2,6-sialic acid residues. N-glycosylated.

It is found in the virion membrane. It localises to the host membrane. The protein resides in the host Golgi apparatus. Its subcellular location is the host trans-Golgi network. Functionally, envelope glycoprotein necessary for proper maturation of gM and modulation of its membrane fusion activity. Also plays a critical role in virion morphogenesis. This Homo sapiens (Human) protein is Envelope glycoprotein N.